Reading from the N-terminus, the 152-residue chain is TOMM20-like protein 1 (152 aa).

The Mitochondrial intermembrane portion of the chain corresponds to 1–9 (MPSVRSLLR). Residues 10-29 (LLAAAAACGAFAFLGYCIYL) form a helical membrane-spanning segment. Residues 30–152 (NRKRRGDPAF…EQDCLEDDPD (123 aa)) lie on the Cytoplasmic side of the membrane. A disordered region spans residues 43–62 (LRDKRRAEPQKAEEQGTQLW). Over residues 47 to 56 (RRAEPQKAEE) the composition is skewed to basic and acidic residues.

Belongs to the Tom20 family.

The protein resides in the mitochondrion outer membrane. The polypeptide is TOMM20-like protein 1 (TOMM20L) (Homo sapiens (Human)).